Consider the following 500-residue polypeptide: NAD(P)H-quinone oxidoreductase chain 4, chloroplastic (500 aa).

The next 14 helical transmembrane spans lie at 4–24 (FPWLTIIVVFPIFAGSLIFFL), 35–55 (YTICICILELLLTTYAFCYHF), 87–107 (IGPILLTGFITTLATLAAWPV), 113–130 (LFHFLMLAMYSGQIGLFS), 134–154 (LLLFFIMWELELIPVYLLLAM), 167–187 (FILYTAGGSVFLLMGVLGVAL), 208–228 (VLEIIFYIGFFIAFAVKSPII), 242–262 (HYSTCMLLAGILLKMGAYGLI), 272–292 (AHSIFSPWLMIIGTIQIIYAA), 305–325 (IAYSSVSHMGFIIIGISSLTD), 330–350 (GALLQIISHGFIGAALFFLAG), 386–406 (LALPGMSGFVAELIVFFGIIT), 416–436 (LLITFVMAIGIILTPIYSLSM), and 462–482 (LFLSISIFLPVIGIGIYPDFV).

It belongs to the complex I subunit 4 family.

The protein resides in the plastid. It localises to the chloroplast thylakoid membrane. It carries out the reaction a plastoquinone + NADH + (n+1) H(+)(in) = a plastoquinol + NAD(+) + n H(+)(out). The catalysed reaction is a plastoquinone + NADPH + (n+1) H(+)(in) = a plastoquinol + NADP(+) + n H(+)(out). The polypeptide is NAD(P)H-quinone oxidoreductase chain 4, chloroplastic (Solanum lycopersicum (Tomato)).